The primary structure comprises 581 residues: Adenine deaminase (581 aa).

This sequence belongs to the metallo-dependent hydrolases superfamily. Adenine deaminase family. It depends on Mn(2+) as a cofactor.

The catalysed reaction is adenine + H2O + H(+) = hypoxanthine + NH4(+). In Clostridium botulinum (strain Eklund 17B / Type B), this protein is Adenine deaminase.